A 431-amino-acid polypeptide reads, in one-letter code: tRNA(Ile)-lysidine synthase (431 aa).

Residue 26–31 (SGGVDS) coordinates ATP.

This sequence belongs to the tRNA(Ile)-lysidine synthase family.

The protein localises to the cytoplasm. It catalyses the reaction cytidine(34) in tRNA(Ile2) + L-lysine + ATP = lysidine(34) in tRNA(Ile2) + AMP + diphosphate + H(+). Ligates lysine onto the cytidine present at position 34 of the AUA codon-specific tRNA(Ile) that contains the anticodon CAU, in an ATP-dependent manner. Cytidine is converted to lysidine, thus changing the amino acid specificity of the tRNA from methionine to isoleucine. The polypeptide is tRNA(Ile)-lysidine synthase (Wolbachia pipientis wMel).